The following is a 184-amino-acid chain: Large ribosomal subunit protein bL9 (184 aa).

The tract at residues Leu-160–Ser-184 is disordered. The span at Asp-173–Ser-184 shows a compositional bias: basic and acidic residues.

Belongs to the bacterial ribosomal protein bL9 family.

Its function is as follows. Binds to the 23S rRNA. The protein is Large ribosomal subunit protein bL9 of Wolbachia sp. subsp. Drosophila simulans (strain wRi).